A 335-amino-acid chain; its full sequence is GTPase Obg (335 aa).

One can recognise an Obg domain in the interval 1-159 (MKFVDSAKIS…YELEMELKLM (159 aa)). The OBG-type G domain occupies 160–323 (ADVGLVGFPN…LKDELWRQVS (164 aa)). Residues 166–173 (GFPNAGKS), 191–195 (FTTLV), 213–216 (DIPG), 280–283 (TKMD), and 304–306 (SSV) each bind GTP. Mg(2+) is bound by residues Ser-173 and Thr-193.

Belongs to the TRAFAC class OBG-HflX-like GTPase superfamily. OBG GTPase family. Monomer. Requires Mg(2+) as cofactor.

Its subcellular location is the cytoplasm. Functionally, an essential GTPase which binds GTP, GDP and possibly (p)ppGpp with moderate affinity, with high nucleotide exchange rates and a fairly low GTP hydrolysis rate. Plays a role in control of the cell cycle, stress response, ribosome biogenesis and in those bacteria that undergo differentiation, in morphogenesis control. The protein is GTPase Obg of Chlorobaculum tepidum (strain ATCC 49652 / DSM 12025 / NBRC 103806 / TLS) (Chlorobium tepidum).